Reading from the N-terminus, the 413-residue chain is CinA-like protein (413 aa).

The protein belongs to the CinA family.

The sequence is that of CinA-like protein from Crocosphaera subtropica (strain ATCC 51142 / BH68) (Cyanothece sp. (strain ATCC 51142)).